A 255-amino-acid chain; its full sequence is Glutamate racemase (255 aa).

Substrate contacts are provided by residues 7-8 (DS) and 39-40 (YG). Cys70 (proton donor/acceptor) is an active-site residue. Position 71–72 (71–72 (NT)) interacts with substrate. Residue Cys181 is the Proton donor/acceptor of the active site. Position 182–183 (182–183 (TH)) interacts with substrate.

The protein belongs to the aspartate/glutamate racemases family.

It catalyses the reaction L-glutamate = D-glutamate. It functions in the pathway cell wall biogenesis; peptidoglycan biosynthesis. Provides the (R)-glutamate required for cell wall biosynthesis. In Helicobacter acinonychis (strain Sheeba), this protein is Glutamate racemase.